The following is a 352-amino-acid chain: Holliday junction branch migration complex subunit RuvB (352 aa).

The segment at Phe13 to Tyr201 is large ATPase domain (RuvB-L). Residues Arg41, Gly82, Lys85, Thr86, Thr87, Glu148–Phe150, Arg191, Tyr201, and Arg238 each bind ATP. A Mg(2+)-binding site is contributed by Thr86. The interval Thr202–Gln273 is small ATPAse domain (RuvB-S). The head domain (RuvB-H) stretch occupies residues Glu276 to Phe352. DNA-binding residues include Arg330 and Arg335.

The protein belongs to the RuvB family. Homohexamer. Forms an RuvA(8)-RuvB(12)-Holliday junction (HJ) complex. HJ DNA is sandwiched between 2 RuvA tetramers; dsDNA enters through RuvA and exits via RuvB. An RuvB hexamer assembles on each DNA strand where it exits the tetramer. Each RuvB hexamer is contacted by two RuvA subunits (via domain III) on 2 adjacent RuvB subunits; this complex drives branch migration. In the full resolvosome a probable DNA-RuvA(4)-RuvB(12)-RuvC(2) complex forms which resolves the HJ.

The protein resides in the cytoplasm. It carries out the reaction ATP + H2O = ADP + phosphate + H(+). Its function is as follows. The RuvA-RuvB-RuvC complex processes Holliday junction (HJ) DNA during genetic recombination and DNA repair, while the RuvA-RuvB complex plays an important role in the rescue of blocked DNA replication forks via replication fork reversal (RFR). RuvA specifically binds to HJ cruciform DNA, conferring on it an open structure. The RuvB hexamer acts as an ATP-dependent pump, pulling dsDNA into and through the RuvAB complex. RuvB forms 2 homohexamers on either side of HJ DNA bound by 1 or 2 RuvA tetramers; 4 subunits per hexamer contact DNA at a time. Coordinated motions by a converter formed by DNA-disengaged RuvB subunits stimulates ATP hydrolysis and nucleotide exchange. Immobilization of the converter enables RuvB to convert the ATP-contained energy into a lever motion, pulling 2 nucleotides of DNA out of the RuvA tetramer per ATP hydrolyzed, thus driving DNA branch migration. The RuvB motors rotate together with the DNA substrate, which together with the progressing nucleotide cycle form the mechanistic basis for DNA recombination by continuous HJ branch migration. Branch migration allows RuvC to scan DNA until it finds its consensus sequence, where it cleaves and resolves cruciform DNA. The sequence is that of Holliday junction branch migration complex subunit RuvB from Prochlorococcus marinus (strain MIT 9312).